A 76-amino-acid polypeptide reads, in one-letter code: Small ribosomal subunit protein bS16 (76 aa).

This sequence belongs to the bacterial ribosomal protein bS16 family.

The protein is Small ribosomal subunit protein bS16 of Helicobacter pylori (strain P12).